The following is a 444-amino-acid chain: Pestheic acid cluster transcriptional regulator 2 (444 aa).

Positions 1-22 (MEAADPNNNLTITSPSTLLSNP) are enriched in polar residues. Residues 1–31 (MEAADPNNNLTITSPSTLLSNPTQPPAQPLK) are disordered. Positions 36–63 (CHACASSKVKCHKEKPTCSRCRKRGITC) form a DNA-binding region, zn(2)-C6 fungal-type. The tract at residues 326–348 (ARVGSGVSTHTTAGQYEPQVEQQ) is disordered. Over residues 331-348 (GVSTHTTAGQYEPQVEQQ) the composition is skewed to polar residues.

The protein resides in the nucleus. Functionally, transcription factor that, with ptaR1 and ptaR3, coregulates the expression of the gene cluster that mediates the biosynthesis of pestheic acid, a diphenyl ether which is a biosynthetic precursor of the unique chloropupukeananes. The chain is Pestheic acid cluster transcriptional regulator 2 from Pestalotiopsis fici (strain W106-1 / CGMCC3.15140).